A 143-amino-acid chain; its full sequence is Fido domain-containing protein DDB_G0283145 (143 aa).

The region spanning 1 to 128 is the Fido domain; the sequence is MKGIIVSDGV…TSHLALIILN (128 aa). Residues 49-69 traverse the membrane as a helical segment; sequence SSPYAVAAWLLHAFVSIHPFI.

It is found in the membrane. The polypeptide is Fido domain-containing protein DDB_G0283145 (Dictyostelium discoideum (Social amoeba)).